The chain runs to 342 residues: Oxygen-dependent coproporphyrinogen-III oxidase (342 aa).

S98 serves as a coordination point for substrate. H102 and H112 together coordinate a divalent metal cation. H112 serves as the catalytic Proton donor. Residue 114-116 (NYR) coordinates substrate. Residues H146 and H176 each coordinate a divalent metal cation. An important for dimerization region spans residues 266–301 (YVEFNLVWDRGTIFGLQTNGRTESILMSLPPLARWE).

Belongs to the aerobic coproporphyrinogen-III oxidase family. As to quaternary structure, homodimer. A divalent metal cation is required as a cofactor.

The protein resides in the cytoplasm. It catalyses the reaction coproporphyrinogen III + O2 + 2 H(+) = protoporphyrinogen IX + 2 CO2 + 2 H2O. It participates in porphyrin-containing compound metabolism; protoporphyrin-IX biosynthesis; protoporphyrinogen-IX from coproporphyrinogen-III (O2 route): step 1/1. Involved in the heme and chlorophyll biosynthesis. Catalyzes the aerobic oxidative decarboxylation of propionate groups of rings A and B of coproporphyrinogen-III to yield the vinyl groups in protoporphyrinogen-IX. This is Oxygen-dependent coproporphyrinogen-III oxidase from Prochlorococcus marinus subsp. pastoris (strain CCMP1986 / NIES-2087 / MED4).